A 638-amino-acid polypeptide reads, in one-letter code: ATP-dependent rRNA helicase spb4 (638 aa).

The Q motif motif lies at 14 to 42; that stretch reads WDGVSPSLSEWVLEAVSSMGFTRMTPVQA. The Helicase ATP-binding domain occupies 45 to 249; that stretch reads IPLFMAHKDV…RVGLRNPVKV (205 aa). 58–65 provides a ligand contact to ATP; sequence AVTGSGKT. The short motif at 197–200 is the DEAD box element; the sequence is DEAD. In terms of domain architecture, Helicase C-terminal spans 283 to 437; sequence ALKHILHSVD…PISFSESEAT (155 aa). Basic and acidic residues-rich tracts occupy residues 534-554 and 577-615; these read LLQE…RKAT and QRRQ…EERR. The interval 534–638 is disordered; sequence LLQESKEGDG…KDEEEFEGFD (105 aa). A coiled-coil region spans residues 566 to 619; it reads RNKKQKRREQKQRRQEKNKWEKMTEEERQKIRETEQMVESIRVKNEEERRLRRA.

Belongs to the DEAD box helicase family. DDX55/SPB4 subfamily. Component of pre-60S ribosomal complexes.

The protein resides in the nucleus. The protein localises to the nucleolus. It carries out the reaction ATP + H2O = ADP + phosphate + H(+). Its function is as follows. ATP-binding RNA helicase involved in the biogenesis of 60S ribosomal subunits. Binds 90S pre-ribosomal particles and dissociates from pre-60S ribosomal particles after processing of 27SB pre-rRNA. Required for the normal formation of 18S rRNA through the processing of pre-rRNAs at sites A0, A1 and A2, and the normal formation of 25S and 5.8S rRNAs through the processing of pre-rRNAs at sites C1 and C2. The polypeptide is ATP-dependent rRNA helicase spb4 (Aspergillus oryzae (strain ATCC 42149 / RIB 40) (Yellow koji mold)).